A 38-amino-acid polypeptide reads, in one-letter code: Photosystem II reaction center protein Y (38 aa).

Topologically, residues 1 to 4 (MSMR) are lumenal. Residues 5 to 23 (LVVVLLPLGIALGWAVYNI) form a helical membrane-spanning segment. The Stromal segment spans residues 24–38 (GKLAIEQWRRTGSKV).

Belongs to the PsbY family. In terms of assembly, PSII is composed of 1 copy each of membrane proteins PsbA, PsbB, PsbC, PsbD, PsbE, PsbF, PsbH, PsbI, PsbJ, PsbK, PsbL, PsbM, PsbT, PsbX, PsbY, PsbZ, Psb30/Ycf12, at least 3 peripheral proteins of the oxygen-evolving complex and a large number of cofactors. It forms dimeric complexes.

The protein localises to the plastid. The protein resides in the cyanelle thylakoid membrane. Functionally, loosely associated component of the core of photosystem II (PSII), it is not always seen in crystals. PSII is a light-driven water plastoquinone oxidoreductase, using light energy to abstract electrons from H(2)O, generating a proton gradient subsequently used for ATP formation. The polypeptide is Photosystem II reaction center protein Y (Cyanophora paradoxa).